Here is a 154-residue protein sequence, read N- to C-terminus: 3-hydroxyacyl-[acyl-carrier-protein] dehydratase FabZ (154 aa).

H60 is a catalytic residue.

The protein belongs to the thioester dehydratase family. FabZ subfamily.

It is found in the cytoplasm. It catalyses the reaction a (3R)-hydroxyacyl-[ACP] = a (2E)-enoyl-[ACP] + H2O. Its function is as follows. Involved in unsaturated fatty acids biosynthesis. Catalyzes the dehydration of short chain beta-hydroxyacyl-ACPs and long chain saturated and unsaturated beta-hydroxyacyl-ACPs. The protein is 3-hydroxyacyl-[acyl-carrier-protein] dehydratase FabZ of Actinobacillus pleuropneumoniae serotype 5b (strain L20).